The sequence spans 247 residues: ATP synthase subunit a, chloroplastic (247 aa).

5 helical membrane passes run 38–58 (QVLI…IIAV), 95–115 (VPFI…GALL), 134–154 (INTT…AGLT), 199–219 (LVVV…VMFL), and 220–240 (GLFT…AYIG).

It belongs to the ATPase A chain family. In terms of assembly, F-type ATPases have 2 components, CF(1) - the catalytic core - and CF(0) - the membrane proton channel. CF(1) has five subunits: alpha(3), beta(3), gamma(1), delta(1), epsilon(1). CF(0) has four main subunits: a, b, b' and c.

It is found in the plastid. The protein localises to the chloroplast thylakoid membrane. Functionally, key component of the proton channel; it plays a direct role in the translocation of protons across the membrane. The protein is ATP synthase subunit a, chloroplastic of Morus indica (Mulberry).